The chain runs to 245 residues: Probable septum site-determining protein MinC (245 aa).

Basic and acidic residues predominate over residues 112 to 132 (ARERPLESAEPVAPKKPEKPP). The interval 112 to 140 (ARERPLESAEPVAPKKPEKPPEPTVKPTR) is disordered.

This sequence belongs to the MinC family. As to quaternary structure, interacts with MinD and FtsZ.

In terms of biological role, cell division inhibitor that blocks the formation of polar Z ring septums. Rapidly oscillates between the poles of the cell to destabilize FtsZ filaments that have formed before they mature into polar Z rings. Prevents FtsZ polymerization. This is Probable septum site-determining protein MinC from Pseudomonas fluorescens (strain Pf0-1).